The primary structure comprises 156 residues: Oxidized purine nucleoside triphosphate hydrolase (156 aa).

In terms of domain architecture, Nudix hydrolase spans 3 to 132 (ASRLYTLVLV…WFPLLLQKKK (130 aa)). Thr-8 lines the 2-oxo-dATP pocket. Positions 8 and 23 each coordinate 8-oxo-dGMP. 8-oxo-dGTP is bound by residues Thr-8 and Lys-23. N(6)-methyl-AMP contacts are provided by Thr-8 and Lys-23. Residues Thr-8 and Lys-23 each contribute to the O(6)-methyl-dGMP site. Position 27 (Phe-27) interacts with 8-oxo-ATP. Residues Asn-33 and 35 to 38 (FGGK) contribute to the 2-oxo-dATP site. Residue Asn-33 participates in 8-oxo-dGMP binding. 8-oxo-dGTP-binding positions include Asn-33 and 35 to 38 (FGGK). Residue Asn-33 participates in O(6)-methyl-dGMP binding. Residues 35 to 38 (FGGK) and Glu-52 contribute to the 8-oxo-ATP site. 5 residues coordinate Mg(2+): Gly-36, Glu-52, Glu-55, Glu-56, and Glu-100. The Nudix box signature appears at 37–58 (GKVQEGETIEDGARRELQEESG). Glu-56 lines the 8-oxo-ATP pocket. 117-120 (WPDD) serves as a coordination point for 2-oxo-dATP. Position 117–120 (117–120 (WPDD)) interacts with 8-oxo-dGMP. Residue 117–120 (WPDD) participates in 8-oxo-dGTP binding. 117–120 (WPDD) provides a ligand contact to N(6)-methyl-AMP. An O(6)-methyl-dGMP-binding site is contributed by 117 to 120 (WPDD). Residue 117 to 120 (WPDD) participates in 8-oxo-ATP binding.

It belongs to the Nudix hydrolase family. As to quaternary structure, monomer. Requires Mg(2+) as cofactor. In terms of processing, the N-terminus is blocked. In terms of tissue distribution, widely expressed with highest expression in thymus, testis, embryo and proliferating blood lymphocytes.

Its subcellular location is the cytoplasm. The protein localises to the cytosol. The protein resides in the mitochondrion matrix. It is found in the nucleus. It carries out the reaction 2-oxo-dATP + H2O = 2-oxo-dAMP + diphosphate + H(+). The enzyme catalyses 2-oxo-ATP + H2O = 2-oxo-AMP + diphosphate + H(+). It catalyses the reaction 8-oxo-dGTP + H2O = 8-oxo-dGMP + diphosphate + H(+). The catalysed reaction is 8-oxo-dATP + H2O = 8-oxo-dAMP + diphosphate + H(+). It carries out the reaction O(6)-methyl-dGTP + H2O = O(6)-methyl-dGMP + diphosphate + H(+). The enzyme catalyses N(6)-methyl-dATP + H2O = N(6)-methyl-dAMP + diphosphate + H(+). It catalyses the reaction N(6)-methyl-ATP + H2O = N(6)-methyl-AMP + diphosphate + H(+). Inhibited by 2-oxo-dADP and 8-oxo-dGDP. Oxidized purine nucleoside triphosphate hydrolase which is a prominent sanitizer of the oxidized nucleotide pool. Catalyzes the hydrolysis of 2-oxo-dATP (2-hydroxy-dATP) into 2-oxo-dAMP. Also has a significant hydrolase activity toward 2-oxo-ATP, 8-oxo-dGTP and 8-oxo-dATP. Through the hydrolysis of oxidized purine nucleoside triphosphates, prevents their incorporation into DNA and the subsequent transversions A:T to C:G and G:C to T:A. Also catalyzes the hydrolysis of methylated purine nucleoside triphosphate preventing their integration into DNA. Through this antimutagenic activity protects cells from oxidative stress. The polypeptide is Oxidized purine nucleoside triphosphate hydrolase (NUDT1) (Homo sapiens (Human)).